A 701-amino-acid chain; its full sequence is Polyribonucleotide nucleotidyltransferase (701 aa).

2 residues coordinate Mg(2+): D490 and D496. The KH domain occupies 557–616; it reads PKVVTMSINPDKIRDVIGPGGKKINEIIDETGVKLDIEQDGTIFIGAVDQAMINRAKEII. In terms of domain architecture, S1 motif spans 626–694; sequence GQVYHAKVKR…KQGRVNASHK (69 aa).

This sequence belongs to the polyribonucleotide nucleotidyltransferase family. Mg(2+) is required as a cofactor.

It is found in the cytoplasm. The enzyme catalyses RNA(n+1) + phosphate = RNA(n) + a ribonucleoside 5'-diphosphate. Its function is as follows. Involved in mRNA degradation. Catalyzes the phosphorolysis of single-stranded polyribonucleotides processively in the 3'- to 5'-direction. This Staphylococcus epidermidis (strain ATCC 12228 / FDA PCI 1200) protein is Polyribonucleotide nucleotidyltransferase.